The sequence spans 61 residues: Metallothionein-1D (61 aa).

A beta region spans residues 1–29 (MDPNCSCSTGGSCSCATSCTCKACRCTSC). A divalent metal cation-binding residues include cysteine 5, cysteine 7, cysteine 13, cysteine 15, cysteine 19, cysteine 21, cysteine 24, cysteine 26, cysteine 29, cysteine 33, cysteine 34, cysteine 36, cysteine 37, cysteine 41, cysteine 44, cysteine 48, cysteine 50, cysteine 57, cysteine 59, and cysteine 60. The alpha stretch occupies residues 30–61 (KKSCCSCCPAGCAKCAQGCICKGASDKCSCCA).

The protein belongs to the metallothionein superfamily. Type 1 family. As to quaternary structure, monomer.

Metallothioneins have a high content of cysteine residues that bind various heavy metals; these proteins are transcriptionally regulated by both heavy metals and glucocorticoids. This Sus scrofa (Pig) protein is Metallothionein-1D (MT1D).